Consider the following 40-residue polypeptide: Photosystem II reaction center protein J (40 aa).

The chain crosses the membrane as a helical span at residues 8–28; sequence IPLWLIGTVTGIAVIGLIGVF.

This sequence belongs to the PsbJ family. As to quaternary structure, PSII is composed of 1 copy each of membrane proteins PsbA, PsbB, PsbC, PsbD, PsbE, PsbF, PsbH, PsbI, PsbJ, PsbK, PsbL, PsbM, PsbT, PsbX, PsbY, PsbZ, Psb30/Ycf12, at least 3 peripheral proteins of the oxygen-evolving complex and a large number of cofactors. It forms dimeric complexes.

It is found in the plastid. Its subcellular location is the chloroplast thylakoid membrane. One of the components of the core complex of photosystem II (PSII). PSII is a light-driven water:plastoquinone oxidoreductase that uses light energy to abstract electrons from H(2)O, generating O(2) and a proton gradient subsequently used for ATP formation. It consists of a core antenna complex that captures photons, and an electron transfer chain that converts photonic excitation into a charge separation. This Oryza nivara (Indian wild rice) protein is Photosystem II reaction center protein J.